Here is a 462-residue protein sequence, read N- to C-terminus: Exodeoxyribonuclease 7 large subunit (462 aa).

Belongs to the XseA family. Heterooligomer composed of large and small subunits.

Its subcellular location is the cytoplasm. It catalyses the reaction Exonucleolytic cleavage in either 5'- to 3'- or 3'- to 5'-direction to yield nucleoside 5'-phosphates.. Functionally, bidirectionally degrades single-stranded DNA into large acid-insoluble oligonucleotides, which are then degraded further into small acid-soluble oligonucleotides. In Pectobacterium atrosepticum (strain SCRI 1043 / ATCC BAA-672) (Erwinia carotovora subsp. atroseptica), this protein is Exodeoxyribonuclease 7 large subunit.